Here is a 209-residue protein sequence, read N- to C-terminus: Holliday junction branch migration complex subunit RuvA (209 aa).

The segment at 1 to 70 (MINYLKGKTT…EDQQILYGFS (70 aa)) is domain I. Positions 71-149 (TDSERDLFRQ…QWEQAIALKT (79 aa)) are domain II. Residues 150–160 (PVSVGVPSREI) are flexible linker. Residues 160–209 (ILEEVEMTLLALGYTDEEIDQAISAISQDNLLLKNPHVEEWLKSAIAWLS) are domain III.

This sequence belongs to the RuvA family. As to quaternary structure, homotetramer. Forms an RuvA(8)-RuvB(12)-Holliday junction (HJ) complex. HJ DNA is sandwiched between 2 RuvA tetramers; dsDNA enters through RuvA and exits via RuvB. An RuvB hexamer assembles on each DNA strand where it exits the tetramer. Each RuvB hexamer is contacted by two RuvA subunits (via domain III) on 2 adjacent RuvB subunits; this complex drives branch migration. In the full resolvosome a probable DNA-RuvA(4)-RuvB(12)-RuvC(2) complex forms which resolves the HJ.

Its subcellular location is the cytoplasm. Functionally, the RuvA-RuvB-RuvC complex processes Holliday junction (HJ) DNA during genetic recombination and DNA repair, while the RuvA-RuvB complex plays an important role in the rescue of blocked DNA replication forks via replication fork reversal (RFR). RuvA specifically binds to HJ cruciform DNA, conferring on it an open structure. The RuvB hexamer acts as an ATP-dependent pump, pulling dsDNA into and through the RuvAB complex. HJ branch migration allows RuvC to scan DNA until it finds its consensus sequence, where it cleaves and resolves the cruciform DNA. This is Holliday junction branch migration complex subunit RuvA from Gloeothece citriformis (strain PCC 7424) (Cyanothece sp. (strain PCC 7424)).